The primary structure comprises 128 residues: Protein BEX2 (128 aa).

The disordered stretch occupies residues 1 to 44 (MMPKEEQVLKNLTMENANEENEKKDEKEQDANKGEPLALSLGAG). Residues 20–33 (ENEKKDEKEQDANK) show a composition bias toward basic and acidic residues. The residue at position 50 (R50) is an Omega-N-methylarginine. The interval 103-128 (QLSHSLRAVSTDPPHHEHNDEFCLMP) is disordered. Residues 115–128 (PPHHEHNDEFCLMP) show a composition bias toward basic and acidic residues. The his cluster stretch occupies residues 117–121 (HHEHN). Position 125 (C125) interacts with Zn(2+).

It belongs to the BEX family. As to quaternary structure, interacts with LMO2, possibly leading to regulate the transcriptional activity of a DNA-binding complex containing LMO2. Interacts with OMP.

Its subcellular location is the cytoplasm. It localises to the nucleus. Regulator of mitochondrial apoptosis and G1 cell cycle. Regulates the level of PP2A regulatory subunit B and PP2A phosphatase activity. In absence of reductive stress, acts as a pseudosubstrate for the CRL2(FEM1B) complex: associates with FEM1B via zinc, thereby preventing association between FEM1B and its substrates. This chain is Protein BEX2 (BEX2), found in Bos taurus (Bovine).